We begin with the raw amino-acid sequence, 132 residues long: Small ribosomal subunit protein uS9 (132 aa).

This sequence belongs to the universal ribosomal protein uS9 family.

In Leptospira borgpetersenii serovar Hardjo-bovis (strain JB197), this protein is Small ribosomal subunit protein uS9.